The chain runs to 417 residues: UPF0761 membrane protein Veis_3782 (417 aa).

The next 6 helical transmembrane spans lie at 54 to 74 (ILAL…FPIF), 111 to 131 (GLGL…ILTI), 151 to 171 (VLIY…SLAL), 192 to 212 (FLFD…LYHY), 226 to 246 (GGLF…LYLG), and 261 to 281 (LPIL…GAVV).

This sequence belongs to the UPF0761 family.

The protein resides in the cell inner membrane. This chain is UPF0761 membrane protein Veis_3782, found in Verminephrobacter eiseniae (strain EF01-2).